The sequence spans 284 residues: Proteasome subunit beta 1 (284 aa).

Positions 1–54 (MAQRDTGGRLGAEFFTPGDSSFTAFLAAHRPALLSTRGLLPDGVRAAPDRVPHG) are cleaved as a propeptide — removed in mature form; by autocatalysis. Residue Thr55 is the Nucleophile of the active site. Residues 256–277 (RLPESETEDLSREMVEQRHTRP) are compositionally biased toward basic and acidic residues. Residues 256-284 (RLPESETEDLSREMVEQRHTRPDGPTAAM) are disordered.

The protein belongs to the peptidase T1B family. As to quaternary structure, the 20S proteasome core is composed of 14 alpha and 14 beta subunits that assemble into four stacked heptameric rings, resulting in a barrel-shaped structure. The two inner rings, each composed of seven catalytic beta subunits, are sandwiched by two outer rings, each composed of seven alpha subunits. The catalytic chamber with the active sites is on the inside of the barrel. Has a gated structure, the ends of the cylinder being occluded by the N-termini of the alpha-subunits. Is capped by the proteasome-associated ATPase, ARC.

It is found in the cytoplasm. It catalyses the reaction Cleavage of peptide bonds with very broad specificity.. It functions in the pathway protein degradation; proteasomal Pup-dependent pathway. The formation of the proteasomal ATPase ARC-20S proteasome complex, likely via the docking of the C-termini of ARC into the intersubunit pockets in the alpha-rings, may trigger opening of the gate for substrate entry. Interconversion between the open-gate and close-gate conformations leads to a dynamic regulation of the 20S proteasome proteolysis activity. In terms of biological role, component of the proteasome core, a large protease complex with broad specificity involved in protein degradation. The chain is Proteasome subunit beta 1 from Streptomyces avermitilis (strain ATCC 31267 / DSM 46492 / JCM 5070 / NBRC 14893 / NCIMB 12804 / NRRL 8165 / MA-4680).